The chain runs to 300 residues: Ribosomal protein bS6--L-glutamate ligase (300 aa).

Positions 104 to 287 constitute an ATP-grasp domain; it reads MQLLARQGID…IAGKMIRWIE (184 aa). Residues Lys141, 178–179, Asp187, and 211–213 contribute to the ATP site; these read EY and RSN. Residues Asp248, Glu260, and Asn262 each coordinate Mg(2+). Positions 248, 260, and 262 each coordinate Mn(2+).

This sequence belongs to the RimK family. Mg(2+) serves as cofactor. The cofactor is Mn(2+).

Functionally, an L-glutamate ligase that catalyzes the ATP-dependent post-translational addition of glutamate residues to the C-terminus of ribosomal protein bS6 (RpsF). Is also able to catalyze the synthesis of poly-alpha-glutamate in vitro, via ATP hydrolysis from unprotected glutamate as substrate. The number of glutamate residues added to either RpsF or to poly-alpha-glutamate changes with pH. This Escherichia coli O7:K1 (strain IAI39 / ExPEC) protein is Ribosomal protein bS6--L-glutamate ligase.